The sequence spans 372 residues: Chaperone protein DnaJ (372 aa).

The J domain maps to 5 to 70; it reads SYYDILGVSK…KKRQAYDQFG (66 aa). The CR-type zinc-finger motif lies at 140 to 218; it reads GREYKIEIPR…CGGQGLQEKR (79 aa). The Zn(2+) site is built by Cys-153, Cys-156, Cys-170, Cys-173, Cys-192, Cys-195, Cys-206, and Cys-209. 4 CXXCXGXG motif repeats span residues 153-160, 170-177, 192-199, and 206-213; these read CVDCNGSG, CPDCGGSG, CPTCRGKG, and CRSCGGQG.

This sequence belongs to the DnaJ family. As to quaternary structure, homodimer. Zn(2+) is required as a cofactor.

The protein resides in the cytoplasm. Participates actively in the response to hyperosmotic and heat shock by preventing the aggregation of stress-denatured proteins and by disaggregating proteins, also in an autonomous, DnaK-independent fashion. Unfolded proteins bind initially to DnaJ; upon interaction with the DnaJ-bound protein, DnaK hydrolyzes its bound ATP, resulting in the formation of a stable complex. GrpE releases ADP from DnaK; ATP binding to DnaK triggers the release of the substrate protein, thus completing the reaction cycle. Several rounds of ATP-dependent interactions between DnaJ, DnaK and GrpE are required for fully efficient folding. Also involved, together with DnaK and GrpE, in the DNA replication of plasmids through activation of initiation proteins. This chain is Chaperone protein DnaJ, found in Leptospira interrogans serogroup Icterohaemorrhagiae serovar copenhageni (strain Fiocruz L1-130).